A 249-amino-acid polypeptide reads, in one-letter code: Vacuolar iron transporter 1 (249 aa).

Residues 1–36 lie on the Cytoplasmic side of the membrane; sequence MADGANDGGNPGAEEQQRLLDQHKEAHFTAGEIVRD. The chain crosses the membrane as a helical span at residues 37 to 57; the sequence is IIIGVSDGLTVPFALAAGLSG. Residues 58 to 63 are Vacuolar-facing; the sequence is ANASSS. A helical transmembrane segment spans residues 64 to 84; sequence IVLTAGIAEVAAGAISMGLGG. Residues 85-170 lie on the Cytoplasmic side of the membrane; it reads YLAAKSEADN…PKRALQSAFT (86 aa). Residues 90–165 form a cytoplasmic metal binding domain (MBD) region; it reads SEADNYAREL…LEKPDPKRAL (76 aa). Fe cation is bound by residues Glu-102, Glu-105, Glu-113, Glu-116, Met-149, and Glu-153. A helical transmembrane segment spans residues 171–191; it reads IAIAYVLGGLVPLIPYMFIPV. Topologically, residues 192-194 are vacuolar; the sequence is ARK. A helical membrane pass occupies residues 195 to 215; sequence AVVASVILTLMALLIFGYAKG. At 216–226 the chain is on the cytoplasmic side; that stretch reads YFTDNKPFKSA. A helical membrane pass occupies residues 227–247; sequence LQTALIGAIASAAAFGMAKAV. Topologically, residues 248–249 are vacuolar; it reads QS.

Belongs to the CCC1 family. Homodimer. The dimeric interaction is mediated by both the transmembrane domains (TMDs) and the cytoplasmic metal binding domain (MBD).

It is found in the vacuole membrane. It catalyses the reaction Fe(2+)(in) = Fe(2+)(out). Its activity is regulated as follows. Transport of iron ions is inhibited by zinc ions. Functionally, vacuolar iron transporter involved in the transfer of iron ions from the cytosol to the vacuole for intracellular iron storage. Can transport cobalt ions from the cytosol to the vacuole. The protein is Vacuolar iron transporter 1 of Eucalyptus grandis (Flooded gum).